The chain runs to 246 residues: Pyruvate formate-lyase 1-activating enzyme (246 aa).

Residues 16-239 enclose the Radical SAM core domain; the sequence is VDGPGIRFIT…MERVKGILEQ (224 aa). [4Fe-4S] cluster-binding residues include Cys30, Cys34, and Cys37. S-adenosyl-L-methionine is bound by residues 36-38, Gly79, 130-132, and His203; these read YCH and DLK.

Belongs to the organic radical-activating enzymes family. [4Fe-4S] cluster is required as a cofactor.

The protein localises to the cytoplasm. The enzyme catalyses glycyl-[formate C-acetyltransferase] + reduced [flavodoxin] + S-adenosyl-L-methionine = glycin-2-yl radical-[formate C-acetyltransferase] + semiquinone [flavodoxin] + 5'-deoxyadenosine + L-methionine + H(+). Its function is as follows. Activation of pyruvate formate-lyase 1 under anaerobic conditions by generation of an organic free radical, using S-adenosylmethionine and reduced flavodoxin as cosubstrates to produce 5'-deoxy-adenosine. This is Pyruvate formate-lyase 1-activating enzyme (pflA) from Escherichia coli O157:H7.